Consider the following 410-residue polypeptide: Translation initiation factor 2 subunit gamma (410 aa).

One can recognise a tr-type G domain in the interval 6–203 (QSEVNIGMVG…AIQDFIPTPE (198 aa)). The tract at residues 15-22 (GHVDHGKT) is G1. D18, T22, G43, and S45 together coordinate Mg(2+). Residue 18–23 (DHGKTS) participates in GTP binding. Positions 43 to 47 (GISIR) are G2. Residues C58, C61, C73, and C76 each contribute to the Zn(2+) site. The G3 stretch occupies residues 90 to 93 (DAPG). Residues 146 to 149 (NKID) and 181 to 183 (SAH) each bind GTP. Residues 146-149 (NKID) form a G4 region. The tract at residues 181–183 (SAH) is G5.

It belongs to the TRAFAC class translation factor GTPase superfamily. Classic translation factor GTPase family. EIF2G subfamily. Heterotrimer composed of an alpha, a beta and a gamma chain. It depends on Mg(2+) as a cofactor.

It carries out the reaction GTP + H2O = GDP + phosphate + H(+). In terms of biological role, eIF-2 functions in the early steps of protein synthesis by forming a ternary complex with GTP and initiator tRNA. In Methanococcus maripaludis (strain DSM 14266 / JCM 13030 / NBRC 101832 / S2 / LL), this protein is Translation initiation factor 2 subunit gamma.